The chain runs to 207 residues: Small ribosomal subunit protein uS4 (207 aa).

The interval 31-51 (KCKLDSKPGQHGRTSGARTSD) is disordered. One can recognise an S4 RNA-binding domain in the interval 97–160 (SRLDNVVYRM…KKQARIRESL (64 aa)).

The protein belongs to the universal ribosomal protein uS4 family. In terms of assembly, part of the 30S ribosomal subunit. Contacts protein S5. The interaction surface between S4 and S5 is involved in control of translational fidelity.

Functionally, one of the primary rRNA binding proteins, it binds directly to 16S rRNA where it nucleates assembly of the body of the 30S subunit. In terms of biological role, with S5 and S12 plays an important role in translational accuracy. The sequence is that of Small ribosomal subunit protein uS4 from Bordetella avium (strain 197N).